The following is a 471-amino-acid chain: Phosphatidylserine synthase 2 (471 aa).

The segment at 1–26 (MRRGERRVAGGSGSESPLLEGRRSTE) is disordered. Residues 1-40 (MRRGERRVAGGSGSESPLLEGRRSTESEVYDDGTNTFFWR) lie on the Cytoplasmic side of the membrane. A phosphoserine mark is found at S12, S14, and S16. Residues 41-61 (AHTLTVLFILTCALGYVTLLE) traverse the membrane as a helical segment. Residues 62-74 (ETPQDTAYNTKRG) lie on the Lumenal side of the membrane. The chain crosses the membrane as a helical span at residues 75–95 (IVASILVFLCFGVTQAKDGPF). Over 96–104 (SRPHPAYWR) the chain is Cytoplasmic. The chain crosses the membrane as a helical span at residues 105-125 (FWLCVSVVYELFLIFILFQTV). The Lumenal segment spans residues 126 to 291 (HDGRQFLKYV…EWKPASSLHR (166 aa)). The N-linked (GlcNAc...) asparagine glycan is linked to N159. The chain crosses the membrane as a helical span at residues 292–312 (WLAVCGIILVFLLAELNTFYL). Position 313 (K313) is a topological domain, cytoplasmic. Residues 314–334 (FVLWMPPEHYLVLLRLVFFVN) form a helical membrane-spanning segment. Over 335-354 (VGGVAMREIYDFMDELKPHR) the chain is Lumenal. A helical membrane pass occupies residues 355 to 375 (KLGQQAWLVAAITVTELLIVV). Topologically, residues 376-381 (KYDPHT) are cytoplasmic. The helical transmembrane segment at 382 to 402 (LTLSLPFYISQCWTLGSILVL) threads the bilayer. Over 403–471 (TWTVWRFFLR…PAEEGPSAAS (69 aa)) the chain is Lumenal. Residues 423-471 (RQKQQSHQAINNGDGHPGPEDDLPGTGTAEEEGTTNDGVPAEEGPSAAS) are disordered.

This sequence belongs to the phosphatidyl serine synthase family.

The protein resides in the endoplasmic reticulum membrane. It carries out the reaction a 1,2-diacyl-sn-glycero-3-phosphoethanolamine + L-serine = a 1,2-diacyl-sn-glycero-3-phospho-L-serine + ethanolamine. The enzyme catalyses 1-hexadecanoyl-2-(9Z-octadecenoyl)-sn-glycero-3-phosphoethanolamine + L-serine = 1-hexadecanoyl-2-(9Z-octadecenoyl)-sn-glycero-3-phospho-L-serine + ethanolamine. It catalyses the reaction 1-hexadecanoyl-2-(4Z,7Z,10Z,13Z,16Z,19Z-docosahexaenoyl)-sn-glycero-3-phosphoethanolamine + L-serine = 1-hexadecanoyl-2-(4Z,7Z,10Z,13Z,16Z,19Z-docosahexaenoyl)-sn-glycero-3-phosphoserine + ethanolamine. The catalysed reaction is 1-octadecanoyl-2-(5Z,8Z,11Z,14Z)-eicosatetraenoyl-sn-glycero-3-phosphoethanolamine + L-serine = 1-octadecanoyl-2-(5Z,8Z,11Z,14Z)-eicosatetraenoyl-sn-glycero-3-phosphoserine + ethanolamine. It carries out the reaction 1-octadecanoyl-2-(4Z,7Z,10Z,13Z,16Z,19Z-docosahexaenoyl)-sn-glycero-3-phosphoethanolamine + L-serine = 1-octadecanoyl-2-(4Z,7Z,10Z,13Z,16Z,19Z-docosahexaenoyl)-sn-glycero-3-phosphoserine + ethanolamine. The enzyme catalyses 1-(1Z-octadecenyl)-2-(4Z,7Z,10Z,13Z,16Z,19Z-docosahexaenoyl)-sn-glycero-3-phosphoethanolamine + L-serine = 1-(1Z-octadecenyl)-2-(4Z,7Z,10Z,13Z,16Z,19Z-docosahexaenoyl)-sn-glycero-3-phospho-L-serine + ethanolamine. It catalyses the reaction 1-octadecanoyl-2-(9Z-octadecenoyl)-sn-glycero-3-phosphoethanolamine + L-serine = 1-octadecanoyl-2-(9Z-octadecenoyl)-sn-glycero-3-phospho-L-serine + ethanolamine. The catalysed reaction is 1-(1Z-octadecenyl)-2-(9Z-octadecenoyl)-sn-glycero-3-phosphoethanolamine + L-serine = 1-(1Z-octadecenyl)-2-(9Z-octadecenoyl)-sn-glycero-3-phospho-L-serine + ethanolamine. It carries out the reaction 1-(1Z-octadecenyl)-2-(5Z,8Z,11Z,14Z- eicosatetraenoyl)-sn-glycero-3-phosphoethanolamine + L-serine = 1-(1Z-octadecenyl)-2-(5Z,8Z,11Z,14Z-eicosatetraenoyl)-sn-glycero-3-phospho-L-serine + ethanolamine. The protein operates within phospholipid metabolism; phosphatidylserine biosynthesis. Functionally, catalyzes a base-exchange reaction in which the polar head group of phosphatidylethanolamine (PE) or phosphatidylcholine (PC) is replaced by L-serine. Catalyzes the conversion of phosphatatidylethanolamine and does not act on phosphatidylcholine. Can utilize both phosphatidylethanolamine (PE) plasmalogen and diacyl PE as substrate and the latter is six times better utilized, indicating the importance of an ester linkage at the sn-1 position. Although it shows no sn-1 fatty acyl preference, exhibits significant preference towards docosahexaenoic acid (22:6n-3) compared with 18:1 or 20:4 at the sn-2 position. The sequence is that of Phosphatidylserine synthase 2 (Ptdss2) from Rattus norvegicus (Rat).